Reading from the N-terminus, the 571-residue chain is Zinc metalloproteinase-disintegrin-like jararhagin (571 aa).

Residues 1-150 constitute a propeptide that is removed on maturation; the sequence is ATRPKGAVQP…KKASQLAFTA (150 aa). Glu151 bears the Pyrrolidone carboxylic acid (Glu) mark. One can recognise a Peptidase M12B domain in the interval 159-355; the sequence is KYIEFFVVVD…HNPECIINEP (197 aa). Positions 162 and 246 each coordinate Ca(2+). Cystine bridges form between Cys270-Cys350, Cys310-Cys334, and Cys312-Cys317. Zn(2+) is bound at residue His295. Residue Glu296 is part of the active site. His299 and His305 together coordinate Zn(2+). Asn333 carries N-linked (GlcNAc...) asparagine glycosylation. Ca(2+)-binding residues include Cys350, Asn353, Val365, Asn368, Leu370, Glu372, Glu375, and Asp378. The Disintegrin domain occupies 363–449; sequence PPVCGNELLE…ECPADVFHKN (87 aa). Cystine bridges form between Cys366-Cys385, Cys366-Cys395, Cys377-Cys390, Cys377-Cys395, Cys379-Cys385, Cys389-Cys412, Cys403-Cys409, Cys408-Cys434, Cys421-Cys441, Cys428-Cys453, Cys428-Cys460, Cys453-Cys465, Cys460-Cys465, Cys472-Cys487, Cys472-Cys522, Cys487-Cys533, Cys500-Cys510, Cys510-Cys517, Cys517-Cys559, Cys522-Cys533, Cys553-Cys564, and Cys559-Cys564. A D/ECD-tripeptide motif is present at residues 427 to 429; the sequence is ECD. Residues Asp429, Pro430, Glu432, Asp444, and Val445 each coordinate Ca(2+).

It belongs to the venom metalloproteinase (M12B) family. P-III subfamily. P-IIIb sub-subfamily. Monomer (Jararhagin and Jararhagin-C) and dimer (Jaracetin). The cofactor is Zn(2+). In terms of processing, the N-terminus of Jararhagin is blocked. Expressed by the venom gland.

The protein resides in the secreted. It carries out the reaction Cleavage of 10-His-|-Leu-11, 14-Ala-|-Leu-15, 16-Tyr-|-Leu-17 and 24-Phe-|-Phe-25 bonds in insulin B chain.. With respect to regulation, inhibited by EDTA, 1,10 phenanthroline and batimastat (a peptidomimetic MMP inhibitor). Snake venom zinc metalloproteinase-disintegrin-like jararhagin: causes hemorrhage. This is the result of the degradation of sub-endothelial matrix proteins leading to the disruption of the blood vessel endothelium, with accompanying disturbances in platelet function. It is able to degrade von Willebrand factor (vWF) and it hydrolyzes the alpha-chain of fibrinogen (FGA) while leaving the beta and gamma chains unaffected. It inhibits collagen-induced platelet aggregation through the binding to alpha-2/beta-1 integrin (ITGA2/ITGB1) (collagen receptor), and it cleaves the beta-1 subunit of the same integrin, inhibiting platelet interaction and ultimately causing impairment of signal transduction. It has inability to be affected by the plasma inhibitor alpha(2)-macroglobulin. In fibroblasts, it functions as a collagen-mimetic substrate and, in endothelial cells, it causes apoptosis and indirectly inhibits cell proliferation by release of angiostatin-like compounds. It induces a strong pro-inflammatory response characterized by intense leukocyte accumulation and release of cytokines at the site of the injection. Although hemorrhage and edema are a response to the direct effect of this toxin, jararhagin-induced inflammation and necrosis are dependent on macrophages and key pro-inflammatory cytokines or their receptors. It also possesses anti-tumorgenic properties. Its function is as follows. The monomeric form inhibits collagen- and ADP-induced platelet aggregation, but has no effect on glycoprotein Ib-IX-dependent (GP1BA/GP5/GP9) platelet agglutination. Locally activates the early events of an acute inflammatory response as leukocyte rolling and pro-inflammatory cytokine release. In terms of biological role, the dimeric form jaracetin may be a dimeric form of jararhagin-C. It binds to von Willebrand factor (VWF) and induces its interaction with GPIbalpha (GP1BA) (via the vWF A1 domain), resulting in platelet aggregation. Also binds the alpha-2 subunit of the alpha-2/beta-1 (ITGA2/ITGB1) integrin. It potently induces platelet aggregation in citrated platelet-rich plasma. In Bothrops jararaca (Jararaca), this protein is Zinc metalloproteinase-disintegrin-like jararhagin.